The following is a 248-amino-acid chain: DNA polymerase sliding clamp (248 aa).

Belongs to the PCNA family. Homotrimer. The subunits circularize to form a toroid; DNA passes through its center. Replication factor C (RFC) is required to load the toroid on the DNA.

In terms of biological role, sliding clamp subunit that acts as a moving platform for DNA processing. Responsible for tethering the catalytic subunit of DNA polymerase and other proteins to DNA during high-speed replication. In Nitrosopumilus maritimus (strain SCM1), this protein is DNA polymerase sliding clamp.